Reading from the N-terminus, the 485-residue chain is MTITPQNLIALLPLLIVGLTVVVVMLSIAWRRNHFLNATLSVIGLNAALVSLWFVGQAGAMDVTPLMRVDGFAMLYTGLVLLASLATCTFAYPWLEDYNDNKDEFYLLVLIAALGGILLANANHLASLFLGIELISLPLFGLVGYAFRQKRSLEASIKYTILSAAASSFLLFGMALVYAQSGDLSFVALGKNLGDGMLNEPLLLAGFGLMIVGLGFKLSLVPFHLWTPDVYQGAPAPVSTFLATASKIAIFGVVMRLFLYAPVGDSEAIRVVLAIIAFASIIFGNLMALSQTNIKRLLGYSSISHLGYLLVALIALQTGEMSMEAVGVYLVGYLFSSLGAFGVVSLMSSPYRGPDADSLFSYRGLFWHRPILAAVMTVMMLSLAGIPMTLGFIGKFYVLAVGVQAHLWWLVGAVVVGSAIGLYYYLRVAVSLYLHAPEQPGRDAPSNWQYSAGGIVVLISALLVLVLGVWPQPLISIVRLAMPLM.

A run of 14 helical transmembrane segments spans residues 8-28, 35-55, 71-91, 105-125, 127-147, 159-179, 203-223, 235-255, 271-291, 297-317, 326-346, 373-393, 408-430, and 455-475; these read LIALLPLLIVGLTVVVVMLSI, FLNATLSVIGLNAALVSLWFV, GFAMLYTGLVLLASLATCTFA, FYLLVLIAALGGILLANANHL, SLFLGIELISLPLFGLVGYAF, YTILSAAASSFLLFGMALVYA, LLAGFGLMIVGLGFKLSLVPF, PAPVSTFLATASKIAIFGVVM, VVLAIIAFASIIFGNLMALSQ, LLGYSSISHLGYLLVALIALQ, VGVYLVGYLFSSLGAFGVVSL, AAVMTVMMLSLAGIPMTLGFI, WWLVGAVVVGSAIGLYYYLRVAV, and IVVLISALLVLVLGVWPQPLI.

This sequence belongs to the complex I subunit 2 family. As to quaternary structure, NDH-1 is composed of 13 different subunits. Subunits NuoA, H, J, K, L, M, N constitute the membrane sector of the complex.

The protein localises to the cell inner membrane. The catalysed reaction is a quinone + NADH + 5 H(+)(in) = a quinol + NAD(+) + 4 H(+)(out). Functionally, NDH-1 shuttles electrons from NADH, via FMN and iron-sulfur (Fe-S) centers, to quinones in the respiratory chain. The immediate electron acceptor for the enzyme in this species is believed to be ubiquinone. Couples the redox reaction to proton translocation (for every two electrons transferred, four hydrogen ions are translocated across the cytoplasmic membrane), and thus conserves the redox energy in a proton gradient. The chain is NADH-quinone oxidoreductase subunit N from Escherichia coli O6:K15:H31 (strain 536 / UPEC).